The primary structure comprises 943 residues: Translation initiation factor IF-2 (943 aa).

Residues 30-357 (SVKSHSSSVE…KPVTERKFHE (328 aa)) form a disordered region. 5 stretches are compositionally biased toward basic and acidic residues: residues 69–82 (PKEE…DKAS), 112–137 (FKAE…DNRN), 145–155 (QGKRHNNDRRN), 163–196 (DHNK…RDNA), and 224–253 (RQSE…EKQQ). Residues 254 to 266 (VKVAVQKAAAETK) are compositionally biased toward low complexity. Basic and acidic residues predominate over residues 296 to 309 (KSRDNRRVNEDGPK). The span at 313 to 332 (NNKWNNQNQVRNQRNSNWNK) shows a compositional bias: low complexity. The tr-type G domain occupies 445–614 (ERAPVVTIMG…LLVAEVEELK (170 aa)). Positions 454-461 (GHVDHGKT) are G1. Position 454 to 461 (454 to 461 (GHVDHGKT)) interacts with GTP. The G2 stretch occupies residues 479–483 (GITQH). Residues 500-503 (DTPG) are G3. GTP-binding positions include 500–504 (DTPGH) and 554–557 (NKID). Residues 554-557 (NKID) form a G4 region. Positions 590-592 (SAK) are G5.

The protein belongs to the TRAFAC class translation factor GTPase superfamily. Classic translation factor GTPase family. IF-2 subfamily.

The protein resides in the cytoplasm. In terms of biological role, one of the essential components for the initiation of protein synthesis. Protects formylmethionyl-tRNA from spontaneous hydrolysis and promotes its binding to the 30S ribosomal subunits. Also involved in the hydrolysis of GTP during the formation of the 70S ribosomal complex. This is Translation initiation factor IF-2 from Streptococcus thermophilus (strain ATCC BAA-250 / LMG 18311).